The following is a 411-amino-acid chain: ATP-dependent Clp protease ATP-binding subunit ClpX (411 aa).

The 49-residue stretch at 1–49 folds into the ClpX-type ZB domain; it reads MSDRDIRCSFCGRTQKEVKKLIAGPGVYICDECVKLAYDIIEEDEEEDV. Zn(2+) is bound by residues C8, C11, C30, and C33. 115 to 122 contributes to the ATP binding site; sequence PTGVGKTL.

This sequence belongs to the ClpX chaperone family. In terms of assembly, component of the ClpX-ClpP complex. Forms a hexameric ring that, in the presence of ATP, binds to fourteen ClpP subunits assembled into a disk-like structure with a central cavity, resembling the structure of eukaryotic proteasomes.

Its function is as follows. ATP-dependent specificity component of the Clp protease. It directs the protease to specific substrates. Can perform chaperone functions in the absence of ClpP. This is ATP-dependent Clp protease ATP-binding subunit ClpX from Dictyoglomus thermophilum (strain ATCC 35947 / DSM 3960 / H-6-12).